We begin with the raw amino-acid sequence, 65 residues long: Photosystem II reaction center protein Z (65 aa).

Transmembrane regions (helical) follow at residues 8–28 (AVFA…VALA) and 41–61 (YAGA…DSVV).

The protein belongs to the PsbZ family. In terms of assembly, PSII is composed of 1 copy each of membrane proteins PsbA, PsbB, PsbC, PsbD, PsbE, PsbF, PsbH, PsbI, PsbJ, PsbK, PsbL, PsbM, PsbT, PsbX, PsbY, PsbZ, Psb30/Ycf12, at least 3 peripheral proteins of the oxygen-evolving complex and a large number of cofactors. It forms dimeric complexes.

The protein localises to the plastid. The protein resides in the cyanelle thylakoid membrane. Functionally, may control the interaction of photosystem II (PSII) cores with the light-harvesting antenna, regulates electron flow through the 2 photosystem reaction centers. PSII is a light-driven water plastoquinone oxidoreductase, using light energy to abstract electrons from H(2)O, generating a proton gradient subsequently used for ATP formation. This Cyanophora paradoxa protein is Photosystem II reaction center protein Z.